The primary structure comprises 172 residues: Putative F-box protein At3g13825 (172 aa).

An F-box domain is found at 1-51 (MTTLSNLSVDLVGEIFSRVPLISLSEVRCTCTTWNTLSWNILSENYVFGKA).

This chain is Putative F-box protein At3g13825, found in Arabidopsis thaliana (Mouse-ear cress).